Reading from the N-terminus, the 90-residue chain is MQQKLFIVTGHVQSVGFRFFTLQEAGKIGIKGYVKNRPEGSVEVVAVGSDAQMAAFRNWLQKGPPTSVVCNLIEQSYQGSEQFEHFEIRR.

An Acylphosphatase-like domain is found at 3 to 90 (QKLFIVTGHV…EQFEHFEIRR (88 aa)). Active-site residues include R18 and N36.

This sequence belongs to the acylphosphatase family.

It catalyses the reaction an acyl phosphate + H2O = a carboxylate + phosphate + H(+). In Actinobacillus pleuropneumoniae serotype 5b (strain L20), this protein is Acylphosphatase (acyP).